Here is a 128-residue protein sequence, read N- to C-terminus: Cytochrome c-type biogenesis protein CcmE (128 aa).

Over 1–8 (MQKRVRNR) the chain is Cytoplasmic. The chain crosses the membrane as a helical; Signal-anchor for type II membrane protein span at residues 9–29 (LITIIICFCSACLGISIILYN). Residues 30-128 (LEKNIVFFLP…KHDENYRPPQ (99 aa)) are Extracellular-facing. Residues His120 and Tyr124 each coordinate heme.

Belongs to the CcmE/CycJ family.

Its subcellular location is the cell membrane. Functionally, heme chaperone required for the biogenesis of c-type cytochromes. Transiently binds heme delivered by CcmC and transfers the heme to apo-cytochromes in a process facilitated by CcmF and CcmH. The protein is Cytochrome c-type biogenesis protein CcmE of Rickettsia africae (strain ESF-5).